The following is a 3722-amino-acid chain: Vitelline envelope sperm lysin receptor (3722 aa).

The N-terminal stretch at 1–24 (MSGMQWSFGFSCLFFLKTVWICQA) is a signal peptide. Residues 25 to 3698 (FDADTPDPRV…TPSTDMATVQ (3674 aa)) are Extracellular-facing. Intrachain disulfides connect Cys-43/Cys-141 and Cys-72/Cys-104. A VERL 1 repeat occupies 77 to 155 (MQMTRGRGIN…SQASNAPEPK (79 aa)). Asn-115, Asn-122, and Asn-142 each carry an N-linked (GlcNAc...) asparagine glycan. The tract at residues 146–169 (SQASNAPEPKASPTSSTPQPEAAS) is disordered. Over residues 157–169 (SPTSSTPQPEAAS) the composition is skewed to polar residues. The N-linked (GlcNAc...) asparagine glycan is linked to Asn-171. Intrachain disulfides connect Cys-182/Cys-280 and Cys-211/Cys-243. A VERL 2 repeat occupies 216–293 (VPITHEHGFN…KSPDAPKPES (78 aa)). Asn-254 carries N-linked (GlcNAc...) asparagine glycosylation. Positions 279 to 335 (QCYMPKSPDAPKPESCLSSPPEPEASPSSNAPEPETYPTSSAPEKVSSDQPAPSHNQ) are disordered. Low complexity predominate over residues 291–312 (PESCLSSPPEPEASPSSNAPEP). Over residues 315–335 (YPTSSAPEKVSSDQPAPSHNQ) the composition is skewed to polar residues. 2 N-linked (GlcNAc...) asparagine glycosylation sites follow: Asn-334 and Asn-373. Cystine bridges form between Cys-345/Cys-443 and Cys-374/Cys-406. The VERL 3 repeat unit spans residues 379-455 (VPITQEFGIN…PKSPVAPKPE (77 aa)). N-linked (GlcNAc...) asparagine glycosylation is found at Asn-417, Asn-438, Asn-487, Asn-501, Asn-526, Asn-570, Asn-591, Asn-640, Asn-654, Asn-679, Asn-723, Asn-744, Asn-793, Asn-807, Asn-832, Asn-876, Asn-897, Asn-946, Asn-960, Asn-985, Asn-1029, Asn-1050, Asn-1099, Asn-1113, Asn-1138, Asn-1182, Asn-1203, Asn-1252, Asn-1266, Asn-1291, Asn-1335, Asn-1356, Asn-1405, Asn-1419, Asn-1443, and Asn-1487. Residues 443-488 (CYMPKSPVAPKPETGPTSNAPEPETYPTSSAPEKVSSDQPAPSHNQ) form a disordered region. Polar residues predominate over residues 457–488 (GPTSNAPEPETYPTSSAPEKVSSDQPAPSHNQ). A VERL 4 repeat occupies 532-608 (VPITQEFGIN…PKSPVAPKPE (77 aa)). The interval 603 to 641 (VAPKPETGPTSNAPEPETYPTSSAPEKVSSDQPAPSHNQ) is disordered. Over residues 610 to 641 (GPTSNAPEPETYPTSSAPEKVSSDQPAPSHNQ) the composition is skewed to polar residues. A VERL 5 repeat occupies 685-761 (VPITQEFGIN…PKSPVAPKPE (77 aa)). A disordered region spans residues 756 to 794 (VAPKPETGPSSNAPEPETYPTSSAPEKVSSDQPAPSHNQ). The segment covering 763-794 (GPSSNAPEPETYPTSSAPEKVSSDQPAPSHNQ) has biased composition (polar residues). Residues 838–914 (VPITQEFGIN…PKSPVAPKPE (77 aa)) form a VERL 6 repeat. The disordered stretch occupies residues 909–947 (VAPKPETGPTSNAPEPETYPTSSAPEKVSSDQPAPSHNQ). Residues 916–947 (GPTSNAPEPETYPTSSAPEKVSSDQPAPSHNQ) are compositionally biased toward polar residues. One copy of the VERL 7 repeat lies at 991-1067 (VPITHEFGIN…PKSPVAPKPE (77 aa)). The segment at 1062 to 1100 (VAPKPETGPTSNAPEPETYPTSSAPEKVSSDQPAPSHNQ) is disordered. Residues 1069–1100 (GPTSNAPEPETYPTSSAPEKVSSDQPAPSHNQ) are compositionally biased toward polar residues. Residues 1144 to 1220 (VPITQEFGIN…PKSPVAPKPE (77 aa)) form a VERL 8 repeat. Residues 1215 to 1253 (VAPKPETGPTSNAPEPETYPTSSAPEKVSSDQPAPSHNQ) are disordered. Over residues 1222-1253 (GPTSNAPEPETYPTSSAPEKVSSDQPAPSHNQ) the composition is skewed to polar residues. The VERL 9 repeat unit spans residues 1297 to 1373 (VPITHKFGIN…PKSPVAHKPE (77 aa)). The interval 1368–1406 (VAHKPETGPTSNAPEPETYPTSSAPEKVSSDQPAPSHNQ) is disordered. Positions 1375–1406 (GPTSNAPEPETYPTSSAPEKVSSDQPAPSHNQ) are enriched in polar residues. A VERL 10 repeat occupies 1449–1525 (VPITHEFGIN…PKSPVAPKPE (77 aa)). The segment at 1519-1556 (PVAPKPETGPSSNAPEPETYPTSSAPEKVYSDQPAPSH) is disordered. Positions 1527-1543 (GPSSNAPEPETYPTSSA) are enriched in polar residues. 60 N-linked (GlcNAc...) asparagine glycosylation sites follow: Asn-1557, Asn-1571, Asn-1596, Asn-1640, Asn-1661, Asn-1710, Asn-1724, Asn-1749, Asn-1793, Asn-1814, Asn-1863, Asn-1877, Asn-1902, Asn-1946, Asn-1967, Asn-2016, Asn-2030, Asn-2055, Asn-2099, Asn-2120, Asn-2169, Asn-2183, Asn-2208, Asn-2252, Asn-2273, Asn-2322, Asn-2336, Asn-2361, Asn-2405, Asn-2426, Asn-2475, Asn-2489, Asn-2514, Asn-2558, Asn-2579, Asn-2628, Asn-2642, Asn-2667, Asn-2711, Asn-2732, Asn-2781, Asn-2795, Asn-2820, Asn-2864, Asn-2885, Asn-2934, Asn-2948, Asn-2973, Asn-3017, Asn-3038, Asn-3087, Asn-3101, Asn-3126, Asn-3170, Asn-3191, Asn-3229, Asn-3243, Asn-3268, Asn-3312, and Asn-3333. One copy of the VERL 11 repeat lies at 1602-1678 (VPITHEFGIN…PKSPVAPKPE (77 aa)). Residues 1672 to 1711 (PVAPKPETGPTSNAPEPQTYPTSSAPEKVSSDQPAPSHNQ) form a disordered region. Residues 1680–1711 (GPTSNAPEPQTYPTSSAPEKVSSDQPAPSHNQ) show a composition bias toward polar residues. The VERL 12 repeat unit spans residues 1755–1831 (VPITQEFGIN…PKSPVAPKPE (77 aa)). The disordered stretch occupies residues 1826 to 1864 (VAPKPETGPTSNAPEPETYPTSSAPEKVSSDQPAPSHNQ). Polar residues predominate over residues 1833–1864 (GPTSNAPEPETYPTSSAPEKVSSDQPAPSHNQ). One copy of the VERL 13 repeat lies at 1908-1984 (VPITHEFGIN…PKSPVAPKPE (77 aa)). The tract at residues 1979-2017 (VAPKPETGPTSNAPEPETYPTSSAPEKVSSDQPAPSHNQ) is disordered. Residues 1986-2017 (GPTSNAPEPETYPTSSAPEKVSSDQPAPSHNQ) are compositionally biased toward polar residues. The VERL 14 repeat unit spans residues 2061–2137 (VPITQEFGIN…PKSPVAPKPE (77 aa)). The tract at residues 2132 to 2170 (VAPKPETGPTSNAPEPETYPTSSAPEKVSSDQPAPSHNQ) is disordered. Positions 2139–2170 (GPTSNAPEPETYPTSSAPEKVSSDQPAPSHNQ) are enriched in polar residues. One copy of the VERL 15 repeat lies at 2214 to 2290 (VPITQEFGIN…PKSPVAPKPE (77 aa)). The segment at 2285 to 2323 (VAPKPETGPTSNAPEPETYPTSSAPEKVSSDQPAPSHNQ) is disordered. Residues 2292-2323 (GPTSNAPEPETYPTSSAPEKVSSDQPAPSHNQ) show a composition bias toward polar residues. A VERL 16 repeat occupies 2367-2443 (VPITQEFGIN…PKSPVAPKPE (77 aa)). The tract at residues 2438-2476 (VAPKPETGPTSNAPEPETYPTSSAPEKVSSDQPAPSHNQ) is disordered. A compositionally biased stretch (polar residues) spans 2445-2476 (GPTSNAPEPETYPTSSAPEKVSSDQPAPSHNQ). A VERL 17 repeat occupies 2520–2596 (VPITQEFGIN…PKSPVAPKPE (77 aa)). The segment at 2590–2629 (PVAPKPETGPTSNAPEPQTYPTSSAPEKVSSDQPAPSHNQ) is disordered. Residues 2598-2629 (GPTSNAPEPQTYPTSSAPEKVSSDQPAPSHNQ) are compositionally biased toward polar residues. The stretch at 2673–2749 (VPITQEFGIN…PKSPVAPKPE (77 aa)) is one VERL 18 repeat. The interval 2744-2782 (VAPKPETGPTSNAPEPETYPTSSAPEKVSSDQPAPSHNQ) is disordered. Residues 2751-2782 (GPTSNAPEPETYPTSSAPEKVSSDQPAPSHNQ) show a composition bias toward polar residues. Residues 2826–2902 (VPITHEFGIN…PKSPVAPKPE (77 aa)) form a VERL 19 repeat. The tract at residues 2897-2935 (VAPKPETGPTSNAPEPQTYPTSSAPEKVSSDQPAPSHNQ) is disordered. Residues 2904-2935 (GPTSNAPEPQTYPTSSAPEKVSSDQPAPSHNQ) show a composition bias toward polar residues. One copy of the VERL 20 repeat lies at 2979-3055 (VPITQEFGIN…PKSPVAPKPE (77 aa)). The interval 3050–3088 (VAPKPETGPTSNAPEPETYPTSSAPEKVSSDQPAPSHNQ) is disordered. Polar residues predominate over residues 3057–3088 (GPTSNAPEPETYPTSSAPEKVSSDQPAPSHNQ). The VERL 21 repeat unit spans residues 3132–3208 (VPITQEFGIN…PKSPVAPKPE (77 aa)). The interval 3205–3230 (PKPETYPTSSAPEKVSSDQPAPSHNQ) is disordered. Residues 3210 to 3230 (YPTSSAPEKVSSDQPAPSHNQ) are compositionally biased toward polar residues. Residues 3274–3351 (VPITHEFGIN…KSPVAPKPEA (78 aa)) form a VERL 22 repeat. Positions 3345–3407 (VAPKPEASPT…RKSNQTTSTE (63 aa)) are disordered. Residues 3352–3375 (SPTSNAPEPQTYPTSSAPGTSPEG) are compositionally biased toward polar residues. 6 N-linked (GlcNAc...) asparagine glycosylation sites follow: Asn-3388, Asn-3401, Asn-3449, Asn-3456, Asn-3559, and Asn-3650. The ZP domain occupies 3408-3670 (DVLDDTSNYI…SSCSNQRRTR (263 aa)). Residues 3699–3719 (VALLVAVALLITQLAGLAIYV) form a helical membrane-spanning segment. Residues 3720 to 3722 (NIN) lie on the Cytoplasmic side of the membrane.

May form disulfide-linked homodimers. Interacts (via VERL repeats) with sperm lysin. Each VERL chain can bind numerous lysin molecules. N-glycosylated. About half of the glycoprotein mass corresponds to carbohydrate chains. N-glycosylation is not required for lysin binding. In terms of processing, O-glycosylated. O-glycosylation is not required for lysin binding.

The protein resides in the cell membrane. The protein localises to the secreted. It is found in the extracellular space. It localises to the extracellular matrix. Structural component of the egg vitelline envelope; forms long filaments. Functions as a species-specific receptor for the sperm protein lysin; prevents fertilization by sperm from other species. Each VERL chain can bind multiple copies of the sperm protein lysin; this creates a 3 um hole in the egg vitelline envelope through which the sperm passes. The polypeptide is Vitelline envelope sperm lysin receptor (Haliotis rufescens (California red abalone)).